Consider the following 987-residue polypeptide: UvrABC system protein A (987 aa).

An ATP-binding site is contributed by 33-40 (GLSGSGKS). The C4-type zinc finger occupies 255–282 (CPVCDYSLPELEPRLFSFNAPVGACPSC). 2 ABC transporter domains span residues 312–589 (WDRR…PRSL) and 609–938 (PNPK…QFLA). 642–649 (GVSGSGKS) is a binding site for ATP. The C4-type zinc finger occupies 741-767 (CEACQGDGMIKVEMHFLPDVYVPCDVC). The interval 948–987 (ETRPAAMANKPDARPPRKVKPEKVAKAAKSATKKTAKKAS) is disordered. The span at 958–972 (PDARPPRKVKPEKVA) shows a compositional bias: basic and acidic residues. Residues 978–987 (ATKKTAKKAS) are compositionally biased toward basic residues.

This sequence belongs to the ABC transporter superfamily. UvrA family. As to quaternary structure, forms a heterotetramer with UvrB during the search for lesions.

It localises to the cytoplasm. The UvrABC repair system catalyzes the recognition and processing of DNA lesions. UvrA is an ATPase and a DNA-binding protein. A damage recognition complex composed of 2 UvrA and 2 UvrB subunits scans DNA for abnormalities. When the presence of a lesion has been verified by UvrB, the UvrA molecules dissociate. The sequence is that of UvrABC system protein A from Xanthomonas axonopodis pv. citri (strain 306).